The following is an 846-amino-acid chain: MKKQFNRMKQLANQTVGRAEKTEVLSEDLLQIERRLDTVRSMCHHSHKRLIACFQGQHGTDAERRHKKLPLTALAQNMQEASAQLEESLLGKMLETCGDAENQLALELSQHEVFVEKEIMDPLYGIAEVEIPNIQKQRKQLARLVLDWDSVRARWNQAHKSSGTNFQGLPSKIDTLKEEMDEAGNKVEQCKDQLAADMYNFMAKEGEYGKFFVTLLEAQADYHRKALAVLEKALPEMRAHQDKWAEKPAFGTPLEEHLKRSGREIALPIEACVMLLLETGMKEEGLFRIGAGASKLKKLKAALDCSTSHLDEFYSDPHAVAGALKSYLRELPEPLMTFSLYEEWTQVASVQDQDKKLQYLWTTCQKLPPQNFVNFRYLIKFLAKLAQTSDVNKMTPSNIAIVLGPNLLWAKQEGTLAEIAAATSVHVVAVIEPIIQHADWFFPGEVEFNVSEAFVPLATPNSNHSSHTGNDSDSGTLERKRPASMAVMEGDLVKKESFGVKLMDFQAHRRGGTLNRKHIAPAFQPPLPPTDGNALAPAGPEPPSQSSRADSSSGGGPVFSSTGILEQGLSPGDSSPPKPKDSVSAAVPAAGRNSNQMTTVPNQAQTGGNSHQLSVSTPHSAAGPSPHTLRRAVKKPAPAPPKPGNLPPGHPGGQSSPGTGTSPKPSARSPSPPQQQQQQQQQQQQQQQQQTPGMRRCSSSLPPIQAPSHPPPQPPTQPRLGEQGPEPGPTPPQTPTPPSTPPLAKQNPSQSETTQLHGTLPRPRPVPKPRNRPSVPPPPHPPGTHTVDGGLTSSVPTASRIVTDTNSRVSESLRSIFPEIHSDLASKEVPGHILLDIDNDTESTAL.

Positions 14–246 (QTVGRAEKTE…MRAHQDKWAE (233 aa)) constitute a BAR domain. One can recognise a Rho-GAP domain in the interval 252–442 (TPLEEHLKRS…PIIQHADWFF (191 aa)). A compositionally biased stretch (polar residues) spans 459-475 (TPNSNHSSHTGNDSDSG). The disordered stretch occupies residues 459–482 (TPNSNHSSHTGNDSDSGTLERKRP). Residues S484 and S575 each carry the phosphoserine modification. Residues 519 to 807 (IAPAFQPPLP…ASRIVTDTNS (289 aa)) form a disordered region. Positions 592–619 (RNSNQMTTVPNQAQTGGNSHQLSVSTPH) are enriched in polar residues. Positions 637-650 (APAPPKPGNLPPGH) are enriched in pro residues. Low complexity predominate over residues 653–690 (GQSSPGTGTSPKPSARSPSPPQQQQQQQQQQQQQQQQQ). 2 positions are modified to phosphoserine: S698 and S700. Composition is skewed to pro residues over residues 704-717 (IQAPSHPPPQPPTQ) and 726-741 (EPGPTPPQTPTPPSTP). 3 positions are modified to phosphothreonine: T730, T734, and T736. Residues 730–743 (TPPQTPTPPSTPPL) carry the SH3-binding motif. S739 is modified (phosphoserine). T740 carries the post-translational modification Phosphothreonine. A compositionally biased stretch (polar residues) spans 746–757 (QNPSQSETTQLH). The span at 772–782 (RPSVPPPPHPP) shows a compositional bias: pro residues. Polar residues predominate over residues 791-807 (LTSSVPTASRIVTDTNS).

As to quaternary structure, component of a complex whose core is composed of ARHGAP17, AMOT, PALS1, PATJ and PARD3/PAR3. Interacts with NHERF1, FNBP1, TRIP10, CAPZA (CAPZA1, CAPZA2 or CAPZA3), CAPZB, CD2AP and SH3KBP1/CIN85.

It is found in the membrane. Its subcellular location is the cytoplasm. The protein resides in the cell junction. It localises to the tight junction. Its function is as follows. Rho GTPase-activating protein involved in the maintenance of tight junction by regulating the activity of CDC42, thereby playing a central role in apical polarity of epithelial cells. Specifically acts as a GTPase activator for the CDC42 GTPase by converting it to an inactive GDP-bound state. The complex formed with AMOT acts by regulating the uptake of polarity proteins at tight junctions, possibly by deciding whether tight junction transmembrane proteins are recycled back to the plasma membrane or sent elsewhere. Participates in the Ca(2+)-dependent regulation of exocytosis, possibly by catalyzing GTPase activity of Rho family proteins and by inducing the reorganization of the cortical actin filaments. Acts as a GTPase activator in vitro for RAC1. The chain is Rho GTPase-activating protein 17 (Arhgap17) from Mus musculus (Mouse).